Here is a 293-residue protein sequence, read N- to C-terminus: Probable xyloglucan endotransglucosylase/hydrolase protein 7 (293 aa).

The first 29 residues, 1–29, serve as a signal peptide directing secretion; sequence MVVSLFSSRNVFYTLSLCLFAALYQPVMS. Residues 30-223 form the GH16 domain; the sequence is RPAKFEDDFR…WSRAPFYAYY (194 aa). Residue glutamate 109 is the Nucleophile of the active site. Glutamate 113 serves as the catalytic Proton donor. A xyloglucan-binding site is contributed by glutamate 113. The N-linked (GlcNAc...) asparagine glycan is linked to asparagine 117. Xyloglucan-binding positions include 126–128, 136–138, 202–203, and glycine 207; these read QTN, DRE, and DW. The N-linked (GlcNAc...) asparagine glycan is linked to asparagine 213. 2 disulfide bridges follow: cysteine 231–cysteine 239 and cysteine 276–cysteine 289. Arginine 281 contacts xyloglucan.

This sequence belongs to the glycosyl hydrolase 16 family. XTH group 1 subfamily. Contains at least one intrachain disulfide bond essential for its enzymatic activity.

The protein resides in the secreted. It localises to the cell wall. Its subcellular location is the extracellular space. It is found in the apoplast. It catalyses the reaction breaks a beta-(1-&gt;4) bond in the backbone of a xyloglucan and transfers the xyloglucanyl segment on to O-4 of the non-reducing terminal glucose residue of an acceptor, which can be a xyloglucan or an oligosaccharide of xyloglucan.. Catalyzes xyloglucan endohydrolysis (XEH) and/or endotransglycosylation (XET). Cleaves and religates xyloglucan polymers, an essential constituent of the primary cell wall, and thereby participates in cell wall construction of growing tissues. This is Probable xyloglucan endotransglucosylase/hydrolase protein 7 (XTH7) from Arabidopsis thaliana (Mouse-ear cress).